Reading from the N-terminus, the 358-residue chain is Fructose-bisphosphate aldolase 7, cytosolic (358 aa).

Residue serine 2 is modified to N-acetylserine. Arginine 52 provides a ligand contact to substrate. Position 68 is an S-glutathionyl cysteine; transient (cysteine 68). Lysine 142 lines the substrate pocket. Cysteine 173 bears the S-glutathionyl cysteine; transient; alternate mark. An S-nitrosocysteine; transient; alternate modification is found at cysteine 173. Residue glutamate 183 is the Proton acceptor of the active site. The active-site Schiff-base intermediate with dihydroxyacetone-P is lysine 225. Serine 266 to isoleucine 268 is a substrate binding site.

This sequence belongs to the class I fructose-bisphosphate aldolase family. Homotetramer. In terms of processing, S-glutathionylated at Cys-68 and Cys-173. Post-translationally, S-nitrosylated at Cys-173. In terms of tissue distribution, highly expressed in flowers, and at lower levels in rosettes leaves and cauline leaves.

It is found in the cytoplasm. It localises to the cytosol. The catalysed reaction is beta-D-fructose 1,6-bisphosphate = D-glyceraldehyde 3-phosphate + dihydroxyacetone phosphate. It participates in carbohydrate degradation; glycolysis; D-glyceraldehyde 3-phosphate and glycerone phosphate from D-glucose: step 4/4. In terms of biological role, plays a key role in glycolysis and gluconeogenesis. The sequence is that of Fructose-bisphosphate aldolase 7, cytosolic from Arabidopsis thaliana (Mouse-ear cress).